The following is a 466-amino-acid chain: Vimentin (466 aa).

2 stretches are compositionally biased toward low complexity: residues 1–13 and 20–31; these read MSTR…SYRR and TASRPSSSRSYV. The disordered stretch occupies residues 1–31; it reads MSTRTVSSSSYRRMFGGPGTASRPSSSRSYV. Ser2 carries the post-translational modification N-acetylserine. A head region spans residues 2–95; the sequence is STRTVSSSSY…FSLADAINTE (94 aa). A Phosphoserine; alternate modification is found at Ser7. An O-linked (GlcNAc) serine; alternate glycan is attached at Ser7. Residues Ser8, Ser9, and Ser10 each carry the phosphoserine modification. Thr20 bears the Phosphothreonine mark. A phosphoserine mark is found at Ser25 and Ser26. O-linked (GlcNAc) threonine glycosylation occurs at Thr33. Residue Ser34 is glycosylated (O-linked (GlcNAc) serine; alternate). Ser34 bears the Phosphoserine; by PKC; alternate mark. Position 39 is a phosphoserine; by CaMK2, PKA, PKC and ROCK2 (Ser39). A phosphoserine mark is found at Ser42, Ser47, Ser49, and Ser51. Position 53 is a phosphotyrosine (Tyr53). A Phosphoserine modification is found at Ser55. Ser56 bears the Phosphoserine; by CDK5 and CDK1 mark. The residue at position 61 (Tyr61) is a Phosphotyrosine. Ser66 carries the post-translational modification Phosphoserine. A Phosphoserine; by AURKB and ROCK2 modification is found at Ser72. A phosphoserine mark is found at Ser73 and Ser87. Positions 96 to 131 are coil 1A; the sequence is FKNTRTNEKVELQELNDRFANYIDKVRFLEQQNKIL. The stretch at 96–131 forms a coiled coil; the sequence is FKNTRTNEKVELQELNDRFANYIDKVRFLEQQNKIL. Residues 103–411 form the IF rod domain; sequence EKVELQELND…KLLEGEESRI (309 aa). A Glycyl lysine isopeptide (Lys-Gly) (interchain with G-Cter in SUMO2) cross-link involves residue Lys104. Tyr117 bears the Phosphotyrosine mark. N6-acetyllysine; alternate is present on residues Lys120, Lys129, and Lys139. 2 positions are modified to N6-succinyllysine; alternate: Lys120 and Lys129. Glycyl lysine isopeptide (Lys-Gly) (interchain with G-Cter in SUMO2); alternate cross-links involve residues Lys120, Lys129, and Lys139. The segment at 132 to 153 is linker 1; the sequence is LAELEQLKGQGKSRLGDLYEEE. Residue Ser144 is modified to Phosphoserine. A coiled-coil region spans residues 154–245; it reads MRELRRQVDQ…KLHDEEIQEL (92 aa). The coil 1B stretch occupies residues 154-245; sequence MRELRRQVDQ…KLHDEEIQEL (92 aa). The residue at position 168 (Lys168) is an N6-acetyllysine. At Lys188 the chain carries N6-acetyllysine; alternate. Lys188 carries the N6-succinyllysine; alternate modification. Ser214 bears the Phosphoserine mark. Lys223 carries the N6-acetyllysine; alternate modification. Lys223 is covalently cross-linked (Glycyl lysine isopeptide (Lys-Gly) (interchain with G-Cter in SUMO2); alternate). Ser226 carries the phosphoserine modification. N6-acetyllysine is present on Lys235. A linker 12 region spans residues 246–268; it reads QAQIQEQHVQIDMDVSKPDLTAA. Lys262 is covalently cross-linked (Glycyl lysine isopeptide (Lys-Gly) (interchain with G-Cter in SUMO2)). A coil 2 region spans residues 269–407; it reads LRDVRQQYES…ATYRKLLEGE (139 aa). At Lys294 the chain carries N6-acetyllysine; alternate. Lys294 is subject to N6-succinyllysine; alternate. A Glycyl lysine isopeptide (Lys-Gly) (interchain with G-Cter in SUMO2); alternate cross-link involves residue Lys294. At Ser299 the chain carries Phosphoserine. Positions 303 to 407 form a coiled coil; that stretch reads NRNNDALRQA…ATYRKLLEGE (105 aa). A Glycyl lysine isopeptide (Lys-Gly) (interchain with G-Cter in SUMO2) cross-link involves residue Lys313. The residue at position 325 (Ser325) is a Phosphoserine. The [IL]-x-C-x-x-[DE] motif motif lies at 326–329; that stretch reads LTCE. The residue at position 373 (Lys373) is an N6-acetyllysine; alternate. Residue Lys373 forms a Glycyl lysine isopeptide (Lys-Gly) (interchain with G-Cter in SUMO2); alternate linkage. Residues 408–466 form a tail region; the sequence is ESRISLPLPNFSSLNLRETNLESLPLVDTHSKRTLLIKTVETRDGQVINETSQHHDDLE. Phosphoserine is present on residues Ser409, Ser412, Ser419, and Ser420. Thr426 carries the post-translational modification Phosphothreonine. The residue at position 430 (Ser430) is a Phosphoserine. Thr436 is modified (phosphothreonine). Ser438 bears the Phosphoserine mark. Lys439 participates in a covalent cross-link: Glycyl lysine isopeptide (Lys-Gly) (interchain with G-Cter in SUMO2). An N6-acetyllysine; alternate modification is found at Lys445. The residue at position 445 (Lys445) is an N6-succinyllysine; alternate. Lys445 is covalently cross-linked (Glycyl lysine isopeptide (Lys-Gly) (interchain with G-Cter in SUMO2); alternate). Lys445 is covalently cross-linked (Glycyl lysine isopeptide (Lys-Gly) (interchain with G-Cter in SUMO1); alternate). Thr446 and Thr458 each carry phosphothreonine. Phosphoserine is present on Ser459.

This sequence belongs to the intermediate filament family. Homomer assembled from elementary dimers. Identified in complexes that contain VIM, EZR, AHNAK, BFSP1, BFSP2, ANK2, PLEC, PRX and spectrin. Interacts with BCAS3. Interacts with LGSN. Interacts with SYNM. Interacts (via rod region) with PLEC (via CH 1 domain). Interacts with STK33. Interacts with LARP6. Interacts with RAB8B. Interacts with TOR1A; the interaction associates TOR1A with the cytoskeleton. Interacts with TOR1AIP1. Interacts with TOR1AIP1. Interacts with DIAPH1. Interacts with EPPK1; interaction is dependent of higher-order structure of intermediate filament. Interacts with the non-receptor tyrosine kinase SRMS; the interaction leads to phosphorylation of VIM. Interacts with NOD2. Interacts (via head region) with CORO1C. Interacts with HDGF. Interacts with PRKCE (via phorbol-ester/DAG-type 2 domain). Interacts with BFSP2. Interacts with PPL. Interacts with PKP1 and PKP2. Interacts with SCRIB (via PDZ domains); the interaction protects SCRIB from proteasomal degradation and facilitates SCRIB localization to intermediate filaments, the interaction is reduced by cell contact inhibition. One of the most prominent phosphoproteins in various cells of mesenchymal origin. Phosphorylation is enhanced during cell division, at which time vimentin filaments are significantly reorganized. Phosphorylation by PKN1 inhibits the formation of filaments. Filament disassembly during mitosis is promoted by phosphorylation at Ser-55 as well as by nestin. Phosphorylated at Ser-56 by CDK5 during neutrophil secretion in the cytoplasm. Phosphorylated by STK33. Phosphorylated on tyrosine residues by SRMS. Post-translationally, S-nitrosylation is induced by interferon-gamma and oxidatively-modified low-densitity lipoprotein (LDL(ox)) possibly implicating the iNOS-S100A8/9 transnitrosylase complex.

It is found in the cytoplasm. It localises to the cytoskeleton. The protein localises to the nucleus matrix. The protein resides in the cell membrane. Vimentins are class-III intermediate filaments found in various non-epithelial cells, especially mesenchymal cells. Vimentin is attached to the nucleus, endoplasmic reticulum, and mitochondria, either laterally or terminally. Plays a role in cell directional movement, orientation, cell sheet organization and Golgi complex polarization at the cell migration front. Protects SCRIB from proteasomal degradation and facilitates its localization to intermediate filaments in a cell contact-mediated manner. Its function is as follows. Involved with LARP6 in the stabilization of type I collagen mRNAs for CO1A1 and CO1A2. This chain is Vimentin (VIM), found in Sus scrofa (Pig).